Reading from the N-terminus, the 278-residue chain is Envelope glycoprotein L (278 aa).

Residues 1–30 (MCRRPDCGFSFSPGPVILLWCCLLLPIVSS) form the signal peptide. The region spanning 43–256 (VPAECPELTR…DKYYAGLPPE (214 aa)) is the gL betaherpesvirus-type domain. C154 and C159 are oxidised to a cystine.

Belongs to the herpesviridae glycoprotein L (gL) family. Betaherpesvirinae gL subfamily. In terms of assembly, interacts with glycoprotein H (gH); this interaction is necessary for the correct processing and cell surface expression of gH. Forms the envelope pentamer complex (PC) composed of gH, gL, UL128, UL130, and UL131A. The pentamer interacts with host NRP2. Forms the envelope trimer complex composed of gH, gL, and gO. The trimer interacts with host PDGFRA. The trimer also interacts with host EPHA2.

It localises to the virion membrane. Its subcellular location is the host cell membrane. The protein resides in the host Golgi apparatus. It is found in the host trans-Golgi network. Its function is as follows. The heterodimer glycoprotein H-glycoprotein L is required for the fusion of viral and plasma membranes leading to virus entry into the host cell. Acts as a functional inhibitor of gH and maintains gH in an inhibited form. Upon binding to host integrins, gL dissociates from gH leading to activation of the viral fusion glycoproteins gB and gH. In human cytomegalovirus, forms two distincts complexes to mediate viral entry, a trimer and a pentamer at the surface of the virion envelope. The gH-gL-gO trimer is required for infection in fibroblasts by interacting with host PDGFRA, and in glioblastoma cells by interacting with host EPHA2. The gH-gL-UL128-UL130-UL131A pentamer is essential for viral entry in epithelial, endothelial and myeloid cells via interaction with host NRP2. In Human cytomegalovirus (strain 5160) (HHV-5), this protein is Envelope glycoprotein L.